A 622-amino-acid polypeptide reads, in one-letter code: TAF6-like RNA polymerase II p300/CBP-associated factor-associated factor 65 kDa subunit 6L (622 aa).

2 disordered regions span residues 403 to 430 (QESS…GPED) and 457 to 546 (GTGQ…TRDV). Serine 495 and serine 501 each carry phosphoserine. The span at 511-522 (ASASGPAASESR) shows a compositional bias: low complexity. Asymmetric dimethylarginine occurs at positions 555, 561, and 593.

This sequence belongs to the TAF6 family. The PCAF complex is composed of a number of TBP-associated factors (TAFS), such as TAF5, TAF5L, TAF6, TAF6L, TAF9, TAF10 and TAF12, PCAF, and also PCAF-associated factors (PAFs), such as TADA2L/ADA2, TADA3L/ADA3 and SPT3. Component of the STAGA transcription coactivator-HAT complex, at least composed of SUPT3H, GCN5L2, TAF5L, TAF6L, SUPT7L, TADA3L, TAD1L, TAF10, TAF12, TRRAP and TAF9.

Its subcellular location is the nucleus. Functions as a component of the PCAF complex. The PCAF complex is capable of efficiently acetylating histones in a nucleosomal context. The PCAF complex could be considered as the human version of the yeast SAGA complex. With TAF5L, acts as an epigenetic regulator essential for somatic reprogramming. Regulates target genes through H3K9ac deposition and MYC recruitment which trigger MYC regulatory network to orchestrate gene expression programs to control embryonic stem cell state. Functions with MYC to activate target gene expression through RNA polymerase II pause release. The protein is TAF6-like RNA polymerase II p300/CBP-associated factor-associated factor 65 kDa subunit 6L of Homo sapiens (Human).